We begin with the raw amino-acid sequence, 878 residues long: Pyruvate dehydrogenase phosphatase regulatory subunit, mitochondrial (878 aa).

A mitochondrion-targeting transit peptide spans 1 to 26 (MLPRLLAVVRGPGSCRGWREGSPARG).

Belongs to the GcvT family. Heterodimer of a catalytic (PDP1) and a regulatory (PDPR) subunit.

It is found in the mitochondrion matrix. In terms of biological role, decreases the sensitivity of PDP1 to magnesium ions, and this inhibition is reversed by the polyamine spermine. The sequence is that of Pyruvate dehydrogenase phosphatase regulatory subunit, mitochondrial (PDPR) from Bos taurus (Bovine).